The sequence spans 346 residues: Protein RecA (346 aa).

65 to 72 serves as a coordination point for ATP; the sequence is GPESSGKT.

Belongs to the RecA family.

The protein localises to the cytoplasm. Its function is as follows. Can catalyze the hydrolysis of ATP in the presence of single-stranded DNA, the ATP-dependent uptake of single-stranded DNA by duplex DNA, and the ATP-dependent hybridization of homologous single-stranded DNAs. It interacts with LexA causing its activation and leading to its autocatalytic cleavage. The protein is Protein RecA of Enterococcus hirae (strain ATCC 9790 / DSM 20160 / JCM 8729 / LMG 6399 / NBRC 3181 / NCIMB 6459 / NCDO 1258 / NCTC 12367 / WDCM 00089 / R).